Reading from the N-terminus, the 629-residue chain is tRNA uridine 5-carboxymethylaminomethyl modification enzyme MnmG (629 aa).

11–16 (GGGHAG) is an FAD binding site. Position 273–287 (273–287 (GPRYCPSFEDKVVRF)) interacts with NAD(+).

This sequence belongs to the MnmG family. In terms of assembly, homodimer. Heterotetramer of two MnmE and two MnmG subunits. Requires FAD as cofactor.

Its subcellular location is the cytoplasm. Its function is as follows. NAD-binding protein involved in the addition of a carboxymethylaminomethyl (cmnm) group at the wobble position (U34) of certain tRNAs, forming tRNA-cmnm(5)s(2)U34. The polypeptide is tRNA uridine 5-carboxymethylaminomethyl modification enzyme MnmG (Mycoplasma capricolum subsp. capricolum (strain California kid / ATCC 27343 / NCTC 10154)).